Here is a 597-residue protein sequence, read N- to C-terminus: MSGGDRFVQTLQKLNYPKGAQLDGEDFDWLFEAVDLKPFLDWFCSAASEQNVVPDEKLQAFNTLKESGKPVLDEKALDEVLKTFSISKVPAIEEVAIEKLEEEVKALQKQKNLHIRRRNKLQMVESGNRQMCLKSKDKEEETGRAFQEVLHLLRVTNKKLNHELQSIVNGVQTLMSFFSTPETACELSSQPIFLSQLLLDKYLSLEEQSTAALTSFTKEHFFEGMSKFVEGSDENFQLVQLNVNSFGEDGTTEDKCKEMMRLQLAYICAKHKLIQMKAKSASLKVGLQWAENNASVVQDKASQKEENLKVRITSLKNETLQIENHTNSISNEKLPGLVRDNAQLLNMPIVKGDYDLQMAHQTSCSSRQDLVCDHLMKQKASFELLQLGYELELRKHRDVYRELGSIVQELKESGDKLEERLTMLSDVNLLSASKPRSNIDSKDLTSHRLYQLLDGDNTQKLFRTYDGLESVAQKLSQDIASMRDQLEVSEQEHSLLLSKLDSHLKELRDFMYPEGNTLMLTTPELSGEFHQLGSQLEKLNHITVEILGDLQLKRKMLESNKLQQIEKQLYVYFFQNEEQLKSIVGKLEAQTGGGSSA.

Coiled-coil stretches lie at residues Ala91 to Met123, Ala290 to Thr319, Glu392 to Asn428, and Arg463 to Ser494.

This sequence belongs to the HAUS3 family. In terms of assembly, component of the HAUS augmin-like complex. The complex interacts with the gamma-tubulin ring complex and this interaction is required for spindle assembly.

The protein resides in the cytoplasm. The protein localises to the cytoskeleton. Its subcellular location is the microtubule organizing center. It is found in the centrosome. It localises to the spindle. Its function is as follows. Contributes to mitotic spindle assembly, maintenance of centrosome integrity and completion of cytokinesis as part of the HAUS augmin-like complex. The sequence is that of HAUS augmin-like complex subunit 3 (haus3) from Xenopus laevis (African clawed frog).